Here is a 53-residue protein sequence, read N- to C-terminus: Alpha-1-antiproteinase 1 (53 aa).

A disordered region spans residues 1–28 (EDLQGDAVPETSATKDDNEXPEMIPMSL).

Belongs to the serpin family. N-glycosylated; contains biantennary glycans. Plasma.

The protein resides in the secreted. This is Alpha-1-antiproteinase 1 from Equus caballus (Horse).